Consider the following 662-residue polypeptide: UvrABC system protein B (662 aa).

Positions Asp-31 to Arg-188 constitute a Helicase ATP-binding domain. ATP is bound at residue Gly-44–Thr-51. Residues Tyr-97–Val-120 carry the Beta-hairpin motif. Residues Gln-435–Ile-601 enclose the Helicase C-terminal domain. The 36-residue stretch at Lys-626–Met-661 folds into the UVR domain.

It belongs to the UvrB family. As to quaternary structure, forms a heterotetramer with UvrA during the search for lesions. Interacts with UvrC in an incision complex.

It localises to the cytoplasm. Its function is as follows. The UvrABC repair system catalyzes the recognition and processing of DNA lesions. A damage recognition complex composed of 2 UvrA and 2 UvrB subunits scans DNA for abnormalities. Upon binding of the UvrA(2)B(2) complex to a putative damaged site, the DNA wraps around one UvrB monomer. DNA wrap is dependent on ATP binding by UvrB and probably causes local melting of the DNA helix, facilitating insertion of UvrB beta-hairpin between the DNA strands. Then UvrB probes one DNA strand for the presence of a lesion. If a lesion is found the UvrA subunits dissociate and the UvrB-DNA preincision complex is formed. This complex is subsequently bound by UvrC and the second UvrB is released. If no lesion is found, the DNA wraps around the other UvrB subunit that will check the other stand for damage. In Streptococcus gordonii (strain Challis / ATCC 35105 / BCRC 15272 / CH1 / DL1 / V288), this protein is UvrABC system protein B.